Reading from the N-terminus, the 453-residue chain is Ribosomal protein uS12 methylthiotransferase RimO (453 aa).

An MTTase N-terminal domain is found at 5–120 (PKVGFVSLGC…VMQAVHSHLP (116 aa)). [4Fe-4S] cluster contacts are provided by C14, C50, C79, C151, C155, and C158. The 246-residue stretch at 137-382 (LTPRHYAYLK…MEVAEEVSAN (246 aa)) folds into the Radical SAM core domain. Residues 385-453 (QRKIGKTLKV…ADGHDLWGEV (69 aa)) form the TRAM domain.

Belongs to the methylthiotransferase family. RimO subfamily. [4Fe-4S] cluster serves as cofactor.

The protein localises to the cytoplasm. It carries out the reaction L-aspartate(89)-[ribosomal protein uS12]-hydrogen + (sulfur carrier)-SH + AH2 + 2 S-adenosyl-L-methionine = 3-methylsulfanyl-L-aspartate(89)-[ribosomal protein uS12]-hydrogen + (sulfur carrier)-H + 5'-deoxyadenosine + L-methionine + A + S-adenosyl-L-homocysteine + 2 H(+). Its function is as follows. Catalyzes the methylthiolation of an aspartic acid residue of ribosomal protein uS12. This Burkholderia orbicola (strain MC0-3) protein is Ribosomal protein uS12 methylthiotransferase RimO.